Here is an 89-residue protein sequence, read N- to C-terminus: uncharacterized protein (89 aa).

Residues Val67 to Trp86 traverse the membrane as a helical segment.

The protein resides in the membrane. This is an uncharacterized protein from Bacillus subtilis (strain 168).